Consider the following 308-residue polypeptide: HPr kinase/phosphorylase (308 aa).

Catalysis depends on residues His138 and Lys159. Residue 153–160 (GESGLGKS) coordinates ATP. Ser160 provides a ligand contact to Mg(2+). Catalysis depends on Asp177, which acts as the Proton acceptor; for phosphorylation activity. Proton donor; for dephosphorylation activity. An important for the catalytic mechanism of both phosphorylation and dephosphorylation region spans residues 201–210 (LEVRGLGLLD). A Mg(2+)-binding site is contributed by Glu202. The active site involves Arg243. The interval 264–269 (QVAAGR) is important for the catalytic mechanism of dephosphorylation.

The protein belongs to the HPrK/P family. In terms of assembly, homohexamer. Mg(2+) serves as cofactor.

The enzyme catalyses [HPr protein]-L-serine + ATP = [HPr protein]-O-phospho-L-serine + ADP + H(+). It catalyses the reaction [HPr protein]-O-phospho-L-serine + phosphate + H(+) = [HPr protein]-L-serine + diphosphate. Its function is as follows. Catalyzes the ATP- as well as the pyrophosphate-dependent phosphorylation of a specific serine residue in HPr, a phosphocarrier protein of the phosphoenolpyruvate-dependent sugar phosphotransferase system (PTS). HprK/P also catalyzes the pyrophosphate-producing, inorganic phosphate-dependent dephosphorylation (phosphorolysis) of seryl-phosphorylated HPr (P-Ser-HPr). This is HPr kinase/phosphorylase from Bordetella petrii (strain ATCC BAA-461 / DSM 12804 / CCUG 43448).